The primary structure comprises 251 residues: Eukaryotic translation initiation factor 4E-3 (251 aa).

The tract at residues 200-251 is disordered; it reads DSSARTSSTVKPRICLPAKDPAPVKEKGPAATTSPSNPGTEATGTSPATPTP. The segment covering 230–251 has biased composition (polar residues); it reads ATTSPSNPGTEATGTSPATPTP.

It belongs to the eukaryotic initiation factor 4E family. As to quaternary structure, eIF4F is a multi-subunit complex, the composition of which varies with external and internal environmental conditions. It is composed of at least eIF4A, eIF4E and eIF4G. eIF4E is also known to interact with other partners. Interacts with mxt. Component of the pid-1 variant of the PETISCO complex (also called the pid-3, erh-2, tofu-6, and ife-3 small RNA complex) containing at least pid-1, tofu-6, ife-3, pid-3, and erh-2, which is required for the biogenesis of a class of 21 nucleotide PIWI-interacting RNAs (piRNAs) that possess a uracil residue at the 5'-end (also called 21U-RNAs). Component of the tost-1 variant of the PETISCO complex (also called the pid-3, erh-2, tofu-6, and ife-3 small RNA complex) containing at least tost-1, tofu-6, ife-3, pid-3, and erh-2, which plays an essential role in embryogenesis. Within the pid-1 and tost-1 variants of the PETISCO complexes interacts with tofu-6 (via C-terminus). In contrast to the pid-1 variant of the PETISCO complex, the tost-1 variant of the PETISCO complex plays a minor role in the biogenesis of 21U-RNAs. As to expression, highly expressed in the germline (at protein level).

It is found in the cytoplasmic granule. It localises to the cytoplasm. Its subcellular location is the perinuclear region. Its function is as follows. Recognizes and binds the 7-methylguanosine-containing mRNA cap during an early step in the initiation of protein synthesis and facilitates ribosome binding by inducing the unwinding of the mRNAs secondary structures. All 5 eIF4E proteins bind monomethyl cap structures. Only ife-1, ife-2 and ife-5 bind trimethyl cap structures which result from trans-splicing. Translation of trimethyl cap structure mRNAs may be regulated by intracellular redox state; disulfide bonds change the width and depth of the cap-binding cavity determining selectivity to mRNA caps. Ife-3 is essential for viability. Component of the pid-1 and tost-1 variants of the PETISCO complexes, which have roles in the biogenesis of a class of 21 nucleotide PIWI-interacting RNAs (piRNAs) that possess a uracil residue at the 5'-end (also called 21U-RNAs) and embryogenesis, respectively. Within the pid-1 variant of the PETISCO complex binds to capped 21U-RNA precursor molecules, possibly playing a role in the processing of the 5' end of the molecules to promote binding of other complex components such as pid-3. However, it is not essential for the biogenesis of 21U-RNAs by itself. Within the tost-1 variant of the PETISCO complex binds to splice leader SL1 RNA fragments to possibly play a role in their processing. The protein is Eukaryotic translation initiation factor 4E-3 of Caenorhabditis elegans.